Consider the following 356-residue polypeptide: Serine/arginine-rich splicing factor RS41 (356 aa).

RRM domains follow at residues 2 to 74 and 96 to 167; these read KPVF…WTKN and KTLF…YAVK. The disordered stretch occupies residues 73–92; that stretch reads KNDRGGAGRSGGSRRSSSGL. A compositionally biased stretch (basic and acidic residues) spans 168 to 186; the sequence is DDDSRGNGYSPERRRDRSP. Residues 168–356 are disordered; it reads DDDSRGNGYS…SPSRSPPAEE (189 aa). Serine 192, serine 194, serine 210, serine 239, serine 254, and serine 274 each carry phosphoserine. Over residues 238-253 the composition is skewed to basic and acidic residues; sequence LSPDYKRDDRRRERVA. Tandem repeats lie at residues 267-278, 279-290, and 291-302. Residues 267-307 form a 4 X 12 AA tandem repeats of [KE]-[GK]-R -[GR]-E-S-R-S-P-P-P-Y region; it reads KGRGESRSPPPYEKRRESRSPPPYEKRRESRSPPPYEKRRE. Over residues 268 to 306 the composition is skewed to basic and acidic residues; the sequence is GRGESRSPPPYEKRRESRSPPPYEKRRESRSPPPYEKRR. The 4; truncated repeat unit spans residues 303–307; the sequence is EKRRE. Serine 309, serine 324, serine 342, serine 347, and serine 351 each carry phosphoserine.

This sequence belongs to the splicing factor SR family. RS subfamily. In terms of assembly, component of the spliceosome. Interacts with RCF3 and CPL1. Interacts with DRB1/HYL1 and SE. As to expression, leaves, stem, roots and flowers.

The protein resides in the nucleus. It is found in the nucleus speckle. In terms of biological role, required for constitutive and alternative pre-mRNA splicing. Involved in primary miRNA processing and pri-miRNA biogenesis. Binds both intronless and intron-containing pri-miRNAs. This Arabidopsis thaliana (Mouse-ear cress) protein is Serine/arginine-rich splicing factor RS41 (RS41).